We begin with the raw amino-acid sequence, 271 residues long: OX-2 membrane glycoprotein homolog (271 aa).

The signal sequence occupies residues 1-24; that stretch reads MSSLFISLPWVAFIWLALLGAVGG. At 25-227 the chain is on the extracellular side; that stretch reads ARVQGPMRGS…QGPLAHDLPA (203 aa). The region spanning 26 to 129 is the Ig-like V-type domain; that stretch reads RVQGPMRGSA…SCTACLEVTS (104 aa). Cys39 and Cys109 are disulfide-bonded. N-linked (GlcNAc...) asparagine; by host glycosylation is found at Asn83, Asn91, Asn138, Asn157, Asn166, and Asn208. In terms of domain architecture, Ig-like C2-type spans 130–220; that stretch reads PPTGHVQVNS…ISIPASIQGP (91 aa). Cys148 and Cys202 are oxidised to a cystine. Residues 228–248 traverse the membrane as a helical segment; it reads AQGTLAGVAITLVGLFGIFAL. Over 249 to 271 the chain is Cytoplasmic; it reads HHCRRKQGGASPTSDDMDPLSTQ.

As to quaternary structure, interacts with human CD200R1. N-glycosylated.

It localises to the host cell membrane. Functionally, dramatically stimulates primary monocytes, macrophages, and dendritic cells to produce the inflammatory cytokines interleukin 1-beta, IL-6, monocyte chemoattractant protein 1, and TNF-alpha. The induction of inflammatory cytokine production potentially promotes the cytokine-mediated angiogenic proliferation of KSHV-infected cells. The sequence is that of OX-2 membrane glycoprotein homolog (K14) from Human herpesvirus 8 type P (isolate GK18) (HHV-8).